Consider the following 517-residue polypeptide: Lysophosphatidylcholine acyltransferase 1 (517 aa).

Residues 1-52 (MRFPNRKLHTAVNGGDSGVSTHFRNPFVHELRFTTLQKLKIAVMTVTLFPVR) are Cytoplasmic-facing. A helical; Signal-anchor for type II membrane protein transmembrane segment spans residues 53 to 73 (LLFAAFMMLLAWPFAFVATVG). Residues 74–517 (RSENAVEPLS…SPRNHSKKQD (444 aa)) lie on the Lumenal side of the membrane. Positions 129-134 (HSSYFD) match the HXXXXD motif motif. Residue Asn207 is glycosylated (N-linked (GlcNAc...) asparagine). An EF-hand domain is found at 443 to 478 (VGDLAVSELFRAIDSQDKGKITFDELCSFMEKCPDL). Asn511 is a glycosylation site (N-linked (GlcNAc...) asparagine). The Di-lysine motif signature appears at 514-517 (KKQD).

This sequence belongs to the 1-acyl-sn-glycerol-3-phosphate acyltransferase family.

It localises to the endoplasmic reticulum membrane. It is found in the golgi apparatus membrane. Its subcellular location is the cell membrane. The protein resides in the lipid droplet. The catalysed reaction is a 1-acyl-sn-glycero-3-phosphocholine + an acyl-CoA = a 1,2-diacyl-sn-glycero-3-phosphocholine + CoA. The enzyme catalyses a 1-O-alkyl-sn-glycero-3-phosphocholine + acetyl-CoA = a 1-O-alkyl-2-acetyl-sn-glycero-3-phosphocholine + CoA. It catalyses the reaction a 1-acyl-sn-glycero-3-phosphate + an acyl-CoA = a 1,2-diacyl-sn-glycero-3-phosphate + CoA. It carries out the reaction a 1-O-(1Z-alkenyl)-sn-glycero-3-phosphocholine + an acyl-CoA = a 1-O-(1Z-alkenyl)-2-acyl-sn-glycero-3-phosphocholine + CoA. The catalysed reaction is 1-acyl-sn-glycero-3-phospho-(1'-sn-glycerol) + an acyl-CoA = a 1,2-diacyl-sn-glycero-3-phospho-(1'-sn-glycerol) + CoA. The enzyme catalyses 1-hexadecanoyl-sn-glycero-3-phosphocholine + hexadecanoyl-CoA = 1,2-dihexadecanoyl-sn-glycero-3-phosphocholine + CoA. It catalyses the reaction 1-O-hexadecyl-sn-glycero-3-phosphocholine + hexadecanoyl-CoA = 1-O-hexadecyl-2-hexadecanoyl-sn-glycero-3-phosphocholine + CoA. It carries out the reaction a 1-O-(1Z-alkenyl)-sn-glycero-3-phosphocholine + hexadecanoyl-CoA = 1-O-(1Z)-alkenyl-2-hexadecanoyl-sn-glycero-3-phosphocholine + CoA. The catalysed reaction is 1-hexadecanoyl-sn-glycero-3-phospho-(1'-sn-glycerol) + hexadecanoyl-CoA = 1,2-dihexadecanoyl-sn-glycero-3-phospho-(1'-sn-glycerol) + CoA. The enzyme catalyses 1-dodecanoyl-sn-glycero-3-phosphocholine + hexadecanoyl-CoA = 1-dodecanoyl-2-hexadecanoyl-sn-glycero-3-phosphocholine + CoA. It catalyses the reaction 1-tetradecanoyl-sn-glycero-3-phosphocholine + hexadecanoyl-CoA = 1-tetradecanoyl-2-hexadecanoyl-sn-glycero-3-phosphocholine + CoA. It carries out the reaction 1-O-octadecyl-sn-glycero-3-phosphocholine + hexadecanoyl-CoA = 1-O-octadecyl-2-hexadecanoyl-sn-glycero-3-phosphocholine + CoA. The catalysed reaction is 1-octadecanoyl-sn-glycero-3-phosphocholine + hexadecanoyl-CoA = 1-octadecanoyl-2-hexadecanoyl-sn-glycero-3-phosphocholine + CoA. The enzyme catalyses 1-(9Z-octadecenoyl)-sn-glycero-3-phosphocholine + hexadecanoyl-CoA = 1-(9Z-octadecenoyl)-2-hexadecanoyl-sn-glycero-3-phosphocholine + CoA. It catalyses the reaction 1-eicosanoyl-sn-glycero-3-phosphocholine + hexadecanoyl-CoA = 1-eicosanoyl-2-hexadecanoyl-sn-glycero-3-phosphocholine + CoA. It carries out the reaction hexanoyl-CoA + 1-hexadecanoyl-sn-glycero-3-phosphocholine = 1-hexadecanoyl-2-hexanoyl-sn-glycero-3-phosphocholine + CoA. The catalysed reaction is octanoyl-CoA + 1-hexadecanoyl-sn-glycero-3-phosphocholine = 1-hexadecanoyl-2-octanoyl-sn-glycero-3-phosphocholine + CoA. The enzyme catalyses decanoyl-CoA + 1-hexadecanoyl-sn-glycero-3-phosphocholine = 1-hexadecanoyl-2-decanoyl-sn-glycero-3-phosphocholine + CoA. It catalyses the reaction dodecanoyl-CoA + 1-hexadecanoyl-sn-glycero-3-phosphocholine = 1-hexadecanoyl-2-dodecanoyl-sn-glycero-3-phosphocholine + CoA. It carries out the reaction tetradecanoyl-CoA + 1-hexadecanoyl-sn-glycero-3-phosphocholine = 1-hexadecanoyl-2-tetradecanoyl-sn-glycero-3-phosphocholine + CoA. The catalysed reaction is 1-hexadecanoyl-sn-glycero-3-phosphocholine + (9Z)-octadecenoyl-CoA = 1-hexadecanoyl-2-(9Z-octadecenoyl)-sn-glycero-3-phosphocholine + CoA. The enzyme catalyses (9Z,12Z)-octadecadienoyl-CoA + 1-hexadecanoyl-sn-glycero-3-phosphocholine = 1-hexadecanoyl-2-(9Z,12Z-octadecadienoyl)-sn-glycero-3-phosphocholine + CoA. It catalyses the reaction (4Z,7Z,10Z,13Z,16Z,19Z)-docosahexaenoyl-CoA + 1-hexadecanoyl-sn-glycero-3-phosphocholine = 1-hexadecanoyl-2-(4Z,7Z,10Z,13Z,16Z,19Z-docosahexaenoyl)-sn-glycero-3-phosphocholine + CoA. It carries out the reaction 1-hexadecanoyl-sn-glycero-3-phosphocholine + acetyl-CoA = 1-hexadecanoyl-2-acetyl-sn-glycero-3-phosphocholine + CoA. The catalysed reaction is eicosanoyl-CoA + 1-hexadecanoyl-sn-glycero-3-phosphocholine = 1-hexadecanoyl-2-eicosanoyl-sn-glycero-3-phosphocholine + CoA. The enzyme catalyses 1-O-hexadecyl-sn-glycero-3-phosphocholine + acetyl-CoA = 1-O-hexadecyl-2-acetyl-sn-glycero-3-phosphocholine + CoA. It catalyses the reaction a 1-acyl-sn-glycero-3-phosphocholine + hexadecanoyl-CoA = 1-acyl-2-hexadecanoyl-sn-glycero-3-phosphocholine + CoA. It carries out the reaction a 1-acyl-sn-glycero-3-phosphate + hexadecanoyl-CoA = 1-acyl-2-hexadecanoyl-sn-glycero-3-phosphate + CoA. The catalysed reaction is 1-acyl-sn-glycero-3-phospho-(1'-sn-glycerol) + hexadecanoyl-CoA = 1-acyl-2-hexadecanoyl-sn-glycero-3-phospho-(1'-sn-glycerol) + CoA. It functions in the pathway lipid metabolism; phospholipid metabolism. Its function is as follows. Exhibits both acyltransferase and acetyltransferase activities. Activity is calcium-independent. Catalyzes the conversion of lysophosphatidylcholine (1-acyl-sn-glycero-3-phosphocholine or LPC) into phosphatidylcholine (1,2-diacyl-sn-glycero-3-phosphocholine or PC). Catalyzes the conversion 1-acyl-sn-glycerol-3-phosphate (lysophosphatidic acid or LPA) into 1,2-diacyl-sn-glycerol-3-phosphate (phosphatidic acid or PA) by incorporating an acyl moiety at the sn-2 position of the glycerol backbone. The polypeptide is Lysophosphatidylcholine acyltransferase 1 (lpcat1) (Danio rerio (Zebrafish)).